The chain runs to 98 residues: Small ribosomal subunit protein uS17 (98 aa).

It belongs to the universal ribosomal protein uS17 family. Part of the 30S ribosomal subunit.

Its function is as follows. One of the primary rRNA binding proteins, it binds specifically to the 5'-end of 16S ribosomal RNA. The chain is Small ribosomal subunit protein uS17 from Carboxydothermus hydrogenoformans (strain ATCC BAA-161 / DSM 6008 / Z-2901).